We begin with the raw amino-acid sequence, 912 residues long: Protein translocase subunit SecA (912 aa).

Residues Gln87, 105–109, and Asp510 contribute to the ATP site; that span reads GEGKT. The interval 854–912 is disordered; it reads KLRHEQASAAQAEGEGDDGQQGQQATPETFVRQERKVGRNEPCPCGSGKKYKQCCGKVS. Zn(2+) contacts are provided by Cys896, Cys898, Cys907, and Cys908.

It belongs to the SecA family. Monomer and homodimer. Part of the essential Sec protein translocation apparatus which comprises SecA, SecYEG and auxiliary proteins SecDF-YajC and YidC. Requires Zn(2+) as cofactor.

It is found in the cell inner membrane. Its subcellular location is the cytoplasm. The enzyme catalyses ATP + H2O + cellular proteinSide 1 = ADP + phosphate + cellular proteinSide 2.. In terms of biological role, part of the Sec protein translocase complex. Interacts with the SecYEG preprotein conducting channel. Has a central role in coupling the hydrolysis of ATP to the transfer of proteins into and across the cell membrane, serving both as a receptor for the preprotein-SecB complex and as an ATP-driven molecular motor driving the stepwise translocation of polypeptide chains across the membrane. The sequence is that of Protein translocase subunit SecA from Marinobacter nauticus (strain ATCC 700491 / DSM 11845 / VT8) (Marinobacter aquaeolei).